Reading from the N-terminus, the 464-residue chain is Argininosuccinate lyase (464 aa).

It belongs to the lyase 1 family. Argininosuccinate lyase subfamily.

It is found in the cytoplasm. It catalyses the reaction 2-(N(omega)-L-arginino)succinate = fumarate + L-arginine. It functions in the pathway amino-acid biosynthesis; L-arginine biosynthesis; L-arginine from L-ornithine and carbamoyl phosphate: step 3/3. This Pseudomonas putida (strain W619) protein is Argininosuccinate lyase.